Reading from the N-terminus, the 721-residue chain is MPRAARKQTLPMREMADLDAVHLGLDENEADIAEELQDFEFNTRSEASESNGGDSSDSEPSISSVSTATSSLAGSSKRKTKKPAKQSPQPAVETKSSKSSAKNKAKREPTPEELNGGKKKKRTDSGTKKTTSSEASDKVKSKSPDTEDRQPSAKKSRTKIPSNANDSAGHKSDLSEAEDEKPSLPTLESDSESSDSDSGTQHKRNGGNGGGNGRGKPSSKSSTPEKDSVGGGTHSHSQKGYDYMTKLNYLFRDTRFFLIKSNNSDNVQLSKNKSVWATLPQNDANLNQAFKEARNVLLIFSVNESGKFAGFARMAAPSRRDIPQVAWVLPPSISPKALGGVIELDWICRKELSFNATLHLHNTWNEGKPVKIGRDGQEIEPKIGGELCRLFPEDEQIELTPILKKSKETARVMREKGIHVIYKPPRSLSSRGHGGGGRGGGRGSNHDHLGPMRHKRSYHGAPHHRPYRHHHGMGLPPGGGFKRSGSPYRQMGGAAGAPPGGPGDMAMPSWERYMSSAAAAEAYVADYMRNMHGQLPPLPFVPPFAQLPIPGAGAGAAGALPPGAAAAMYEQLPPPVRYYDGPGAPPLPDYPPPQRPPPPGFDKAPSYEEFAAWKNAGLPTVPPPGFPVYGGAANGGSNGAGGLAAAQAAAAGGGMGAGGGSGGGMGGPGGYRNRDGNNGSAGGRRREYGNRSGGGGSSRDSRPFRERGGGGGQRSYRDNRR.

The span at 29 to 38 (EADIAEELQD) shows a compositional bias: acidic residues. A disordered region spans residues 29–239 (EADIAEELQD…GGGTHSHSQK (211 aa)). Residues 48 to 75 (SESNGGDSSDSEPSISSVSTATSSLAGS) are compositionally biased toward low complexity. A compositionally biased stretch (basic and acidic residues) spans 135-151 (ASDKVKSKSPDTEDRQP). Residues 254–391 (TRFFLIKSNN…KIGGELCRLF (138 aa)) form the YTH domain. RNA contacts are provided by residues 260 to 262 (KSN), tryptophan 276, and tryptophan 327. Disordered regions lie at residues 424–471 (PPRS…RHHH), 580–605 (DGPG…DKAP), and 651–721 (AGGG…DNRR). The span at 432-443 (GHGGGGRGGGRG) shows a compositional bias: gly residues. Residues 451 to 471 (PMRHKRSYHGAPHHRPYRHHH) show a composition bias toward basic residues. Over residues 583–600 (GAPPLPDYPPPQRPPPPG) the composition is skewed to pro residues. Over residues 651-670 (AGGGMGAGGGSGGGMGGPGG) the composition is skewed to gly residues. A compositionally biased stretch (basic and acidic residues) spans 699–708 (RDSRPFRERG).

It is found in the nucleus. Its function is as follows. Regulator of alternative splicing that specifically recognizes and binds N6-methyladenosine (m6A)-containing RNAs. Acts by acting as a reader of m6A methylation. Required for sex determination and dosage compensation via Sxl alternative splicing: m6A methylation acts as a key regulator of Sxl pre-mRNA and promotes female-specific alternative splicing of Sxl, which determines female physiognomy. M6A methylation is also required for neuronal functions. The protein is YTH domain-containing protein 1 of Drosophila melanogaster (Fruit fly).